We begin with the raw amino-acid sequence, 243 residues long: Pyridoxine 5'-phosphate synthase (243 aa).

Asparagine 9 is a binding site for 3-amino-2-oxopropyl phosphate. 1-deoxy-D-xylulose 5-phosphate is bound at residue 11–12 (DH). Residue arginine 20 participates in 3-amino-2-oxopropyl phosphate binding. Histidine 45 (proton acceptor) is an active-site residue. 1-deoxy-D-xylulose 5-phosphate is bound by residues arginine 47 and histidine 52. Glutamate 72 acts as the Proton acceptor in catalysis. Residue threonine 102 participates in 1-deoxy-D-xylulose 5-phosphate binding. Histidine 193 functions as the Proton donor in the catalytic mechanism. Residues glycine 194 and 215–216 (GH) each bind 3-amino-2-oxopropyl phosphate.

This sequence belongs to the PNP synthase family. Homooctamer; tetramer of dimers.

It localises to the cytoplasm. It catalyses the reaction 3-amino-2-oxopropyl phosphate + 1-deoxy-D-xylulose 5-phosphate = pyridoxine 5'-phosphate + phosphate + 2 H2O + H(+). It functions in the pathway cofactor biosynthesis; pyridoxine 5'-phosphate biosynthesis; pyridoxine 5'-phosphate from D-erythrose 4-phosphate: step 5/5. Its function is as follows. Catalyzes the complicated ring closure reaction between the two acyclic compounds 1-deoxy-D-xylulose-5-phosphate (DXP) and 3-amino-2-oxopropyl phosphate (1-amino-acetone-3-phosphate or AAP) to form pyridoxine 5'-phosphate (PNP) and inorganic phosphate. The chain is Pyridoxine 5'-phosphate synthase from Salmonella typhimurium (strain LT2 / SGSC1412 / ATCC 700720).